The chain runs to 174 residues: Co-chaperone protein HscB (174 aa).

The J domain maps to aspartate 2 to leucine 74.

The protein belongs to the HscB family. Interacts with HscA and stimulates its ATPase activity. Interacts with IscU.

Its function is as follows. Co-chaperone involved in the maturation of iron-sulfur cluster-containing proteins. Seems to help targeting proteins to be folded toward HscA. The protein is Co-chaperone protein HscB of Yersinia pestis bv. Antiqua (strain Antiqua).